The primary structure comprises 799 residues: Protein translocase subunit SecA (799 aa).

ATP contacts are provided by residues Gln-85, 103-107 (GEGKT), and Asp-504.

Belongs to the SecA family. In terms of assembly, monomer and homodimer. Part of the essential Sec protein translocation apparatus which comprises SecA, SecYEG and auxiliary proteins SecDF. Other proteins may also be involved.

The protein resides in the cell membrane. It is found in the cytoplasm. It catalyses the reaction ATP + H2O + cellular proteinSide 1 = ADP + phosphate + cellular proteinSide 2.. In terms of biological role, part of the Sec protein translocase complex. Interacts with the SecYEG preprotein conducting channel. Has a central role in coupling the hydrolysis of ATP to the transfer of proteins into and across the cell membrane, serving as an ATP-driven molecular motor driving the stepwise translocation of polypeptide chains across the membrane. This chain is Protein translocase subunit SecA, found in Lactobacillus gasseri (strain ATCC 33323 / DSM 20243 / BCRC 14619 / CIP 102991 / JCM 1131 / KCTC 3163 / NCIMB 11718 / NCTC 13722 / AM63).